Here is a 30-residue protein sequence, read N- to C-terminus: Chassatide C9 (30 aa).

The cyclopeptide (Gly-Asn) cross-link spans 1-30; it reads GIPCGESCVFIPCVTTVIGCSCKDKVCYNN. 3 cysteine pairs are disulfide-bonded: Cys4-Cys20, Cys8-Cys22, and Cys13-Cys27.

Post-translationally, this is a cyclic peptide.

Functionally, probably participates in a plant defense mechanism. In Chassalia chartacea (Chassalia curviflora), this protein is Chassatide C9.